A 229-amino-acid chain; its full sequence is Large ribosomal subunit protein uL1 (229 aa).

This sequence belongs to the universal ribosomal protein uL1 family. As to quaternary structure, part of the 50S ribosomal subunit.

In terms of biological role, binds directly to 23S rRNA. The L1 stalk is quite mobile in the ribosome, and is involved in E site tRNA release. Protein L1 is also a translational repressor protein, it controls the translation of the L11 operon by binding to its mRNA. The polypeptide is Large ribosomal subunit protein uL1 (Gemmatimonas aurantiaca (strain DSM 14586 / JCM 11422 / NBRC 100505 / T-27)).